The sequence spans 178 residues: Transcription antitermination protein NusB (178 aa).

The protein belongs to the NusB family.

Its function is as follows. Involved in transcription antitermination. Required for transcription of ribosomal RNA (rRNA) genes. Binds specifically to the boxA antiterminator sequence of the ribosomal RNA (rrn) operons. The chain is Transcription antitermination protein NusB from Alkalilimnicola ehrlichii (strain ATCC BAA-1101 / DSM 17681 / MLHE-1).